The following is a 77-amino-acid chain: Teretoxin Tan15.2 (77 aa).

The signal sequence occupies residues 1–21 (MTRLTVVFLAILVLLPLATSN). Residues 22–40 (SGADEAPASLSDLLHRTKR) constitute a propeptide that is removed on maturation.

Contains 4 disulfide bonds. As to expression, expressed by the venom duct.

It localises to the secreted. The chain is Teretoxin Tan15.2 from Terebra anilis (Auger snail).